A 550-amino-acid polypeptide reads, in one-letter code: GMP synthase [glutamine-hydrolyzing] (550 aa).

In terms of domain architecture, Glutamine amidotransferase type-1 spans 39 to 232 (RILILDFGSQ…VHKICGCGGL (194 aa)). C116 (nucleophile) is an active-site residue. Residues H206 and E208 contribute to the active site. A GMPS ATP-PPase domain is found at 233–425 (WTPEHIIDLR…LGLPHSMIYR (193 aa)). 260–266 (SGGVDSS) contributes to the ATP binding site.

Homodimer.

It catalyses the reaction XMP + L-glutamine + ATP + H2O = GMP + L-glutamate + AMP + diphosphate + 2 H(+). Its pathway is purine metabolism; GMP biosynthesis; GMP from XMP (L-Gln route): step 1/1. Its function is as follows. Catalyzes the synthesis of GMP from XMP. The polypeptide is GMP synthase [glutamine-hydrolyzing] (Acinetobacter baylyi (strain ATCC 33305 / BD413 / ADP1)).